Here is a 142-residue protein sequence, read N- to C-terminus: Large ribosomal subunit protein uL13 (142 aa).

It belongs to the universal ribosomal protein uL13 family. As to quaternary structure, part of the 50S ribosomal subunit.

Functionally, this protein is one of the early assembly proteins of the 50S ribosomal subunit, although it is not seen to bind rRNA by itself. It is important during the early stages of 50S assembly. In Xylella fastidiosa (strain 9a5c), this protein is Large ribosomal subunit protein uL13.